A 511-amino-acid chain; its full sequence is Archaeal glutamate synthase [NADPH] (511 aa).

2 4Fe-4S ferredoxin-type domains span residues 15-44 (FMIE…YDEE) and 46-75 (DMMR…VKPH). Residues C24, C27, C30, C34, C55, C58, C61, and C65 each contribute to the [4Fe-4S] cluster site.

Belongs to the glutamate synthase family. The cofactor is FMN.

It carries out the reaction 2 L-glutamate + NADP(+) = L-glutamine + 2-oxoglutarate + NADPH + H(+). The protein is Archaeal glutamate synthase [NADPH] of Archaeoglobus fulgidus (strain ATCC 49558 / DSM 4304 / JCM 9628 / NBRC 100126 / VC-16).